A 141-amino-acid polypeptide reads, in one-letter code: 16 kDa protein (141 aa).

The segment at 95–116 (ESSSATRKKSHNSKNSKKKFKE) is disordered. Positions 100-113 (TRKKSHNSKNSKKK) are enriched in basic residues.

The sequence is that of 16 kDa protein from Tobacco rattle virus (strain PSG).